The following is a 198-amino-acid chain: Cyclin-dependent kinase inhibitor 1B (198 aa).

Residues 1–11 (MSNVRVSNGSP) are compositionally biased toward polar residues. The interval 1–34 (MSNVRVSNGSPSLERMDARQAEHPKPSACRNLFG) is disordered. S10 is modified (phosphoserine; by UHMK1). The span at 14–25 (ERMDARQAEHPK) shows a compositional bias: basic and acidic residues. The segment at 51-91 (DMEEASQRKWNFDFQNHKPLEGKYEWQEVEKGSLPEFYYRP) is interaction with CDK2. Phosphotyrosine; by SRC is present on Y74. The disordered stretch occupies residues 85 to 198 (PEFYYRPPRP…KKPGLRRRQT (114 aa)). Y88 is modified (phosphotyrosine; by ABL, LYN, SRC and JAK2). Y89 is subject to Phosphotyrosine. Residues 126–137 (EDTHLVDPKTDP) are compositionally biased toward basic and acidic residues. A Nuclear localization signal motif is present at residues 153-169 (KRPATDDSSTQNKRANR). Residue T157 is modified to Phosphothreonine; by CaMK1, PKB/AKT1 and PIM1. T170 is modified (phosphothreonine). Residues 175-186 (SDGSPNAGSVEQ) are compositionally biased toward polar residues. At T187 the chain carries Phosphothreonine; by PKB/AKT1, CDK1 and CDK2. T198 carries the phosphothreonine; by CaMK1, PKB/AKT1, RPS6KA1, RPS6KA3 and PIM1 modification.

This sequence belongs to the CDI family. Forms a ternary complex composed of CCNE1, CDK2 and CDKN1B. Interacts directly with CCNE1; the interaction is inhibited by CDK2-dependent phosphorylation on Thr-187. Interacts with COPS5, subunit of the COP9 signalosome complex; the interaction leads to CDKN1B degradation. Interacts with NUP50; the interaction leads to nuclear import and degradation of phosphorylated CDKN1B. Interacts with CCND1 and SNX6. Interacts (Thr-198-phosphorylated form) with 14-3-3 proteins, binds strongly YWHAQ, weakly YWHAE and YWHAH, but not YWHAB nor YWHAZ; the interaction with YWHAQ results in translocation to the cytoplasm. Interacts with AKT1 and LYN; the interactions lead to cytoplasmic mislocation, phosphorylation of CDKN1B and inhibition of cell cycle arrest. Forms a ternary complex with CCNA2 and CDK2; CDKN1B inhibits the kinase activity of CDK2 through conformational rearrangements. Interacts (unphosphorylated form) with CDK2. Forms a complex with CDK2 and SPDYA, but does not directly interact with SPDYA. Forms a ternary complex composed of cyclin D, CDK4 and CDKN1B. Interacts (phosphorylated on Tyr-88 and Tyr-89) with CDK4; the interaction is required for cyclin D and CDK4 complex assembly, induces nuclear translocation and activates the CDK4 kinase activity. Interacts with GRB2. Interacts with PIM1. Identified in a complex with SKP1, SKP2 and CKS1B. Interacts with UHMK1; the interaction leads to cytoplasmic mislocation, phosphorylation of CDKN1B and inhibition of cell cycle arrest. Also interacts with CDK1. Dephosphorylated on Thr-187 by PPM1H, leading to CDKN1B stability. Interacts with HSPA8; the interaction may be associated with susceptibility to ubiquitination. Phosphorylated; phosphorylation occurs on serine, threonine and tyrosine residues. Phosphorylation on Ser-10 is the major site of phosphorylation in resting cells, takes place at the G(0)-G(1) phase and leads to protein stability. Phosphorylation on other sites is greatly enhanced by mitogens, growth factors, cMYC and in certain cancer cell lines. The phosphorylated form found in the cytoplasm is inactivate. Phosphorylation on Thr-198 is required for interaction with 14-3-3 proteins. Phosphorylation on Thr-187, by CDK1 and CDK2 leads to protein ubiquitination and proteasomal degradation. Tyrosine phosphorylation promotes this process. Phosphorylation by PKB/AKT1 can be suppressed by LY294002, an inhibitor of the catalytic subunit of PI3K. Phosphorylation on Tyr-88 and Tyr-89 has no effect on binding CDK2, but is required for binding CDK4. Dephosphorylated on tyrosine residues by G-CSF. In terms of processing, ubiquitinated; in the cytoplasm by the KPC complex (composed of RNF123/KPC1 and UBAC1/KPC2) and, in the nucleus, by SCF(SKP2). The latter requires prior phosphorylation on Thr-187. Ubiquitinated; by a TRIM21-containing SCF(SKP2)-like complex; leads to its degradation. Post-translationally, subject to degradation in the lysosome. Interaction with SNX6 promotes lysosomal degradation. As to expression, expressed in kidney (at protein level). Expressed in all tissues tested. Highest levels in skeletal muscle, lowest in liver and kidney.

It is found in the nucleus. Its subcellular location is the cytoplasm. The protein localises to the endosome. Functionally, important regulator of cell cycle progression. Inhibits the kinase activity of CDK2 bound to cyclin A, but has little inhibitory activity on CDK2 bound to SPDYA. Involved in G1 arrest. Potent inhibitor of cyclin E- and cyclin A-CDK2 complexes. Forms a complex with cyclin type D-CDK4 complexes and is involved in the assembly, stability, and modulation of CCND1-CDK4 complex activation. Acts either as an inhibitor or an activator of cyclin type D-CDK4 complexes depending on its phosphorylation state and/or stoichometry. This is Cyclin-dependent kinase inhibitor 1B from Homo sapiens (Human).